Here is a 1213-residue protein sequence, read N- to C-terminus: MAVRKKDGGPNVKYYEAADTVTQFDNVRLWLGKNYKKYIQAEPPTNKSLSSLVVQLLQFQEEVFGKHVSNAPLTKLPIKCFLDFKAGGSLCHILAAAYKFKSDQGWRRYDFQNPSRMDRNVEMFMTIEKSLVQNNCLSRPNIFLCPEIEPKLLGKLKDIVKRHQGTISEDKSNASHVVYPVPGNLEEEEWVRPVMKRDKQVLLHWGYYPDSYDTWIPASEIEASVEDAPTPEKPRKVHAKWILDTDTFNEWMNEEDYEVSDDKSPVSRRKKISAKTLTDEVNSPDSDRRDKKGGNYKKRKRSPSPSPTPEAKKKNAKKGPSTPYTKSKRGHREEEQEDLTKDMDEPSPVPNVEEVTLPKTVNTKKDSESAPVKGGTMTDLDEQDDESMETTGKDEDENSTGNKGEQTKNPDLHEDNVTEQTHHIIIPSYAAWFDYNSVHAIERRALPEFFNGKNKSKTPEIYLAYRNFMIDTYRLNPQEYLTSTACRRNLAGDVCAIMRVHAFLEQWGLINYQVDAESRPTPMGPPPTSHFHVLADTPSGLVPLQPKPPQQSSASQQMLNFPEKGKEKPADMQNFGLRTDMYTKKNVPSKSKAAASATREWTEQETLLLLEALEMYKDDWNKVSEHVGSRTQDECILHFLRLPIEDPYLEDSEASLGPLAYQPIPFSQSGNPVMSTVAFLASVVDPRVASAAAKSALEEFSKMKEEVPTALVEAHVRKVEEAAKVTGKADPAFGLESSGIAGTASDEPERIEESGTEEARPEGQAADEKKEPKEPREGGGAVEEEAKEEISEVPKKDEEKGKEGDSEKESEKSDGDPIVDPEKDKEPTEGQEEVLKEVAEPEGERKTKVERDIGEGNLSTAAAAALAAAAVKAKHLAAVEERKIKSLVALLVETQMKKLEIKLRHFEELETIMDREREALEYQRQQLLADRQAFHMEQLKYAEMRARQQHFQQMHQQQQQQPPTLPPGSQPIPPTGAAGPPTVHGLAVPPAAVASAPPGSGAPPGSLGPSEQIGQAGTTAGPQQPQQAGAPQPGAVPPGVPPPGPHGPSPFPNQPTPPSMMPGAVPGSGHPGVAGNAPLGLPFGMPPPPPAAPSVIPFGSLADSISINLPPPPNLHGHHHHLPFAPGTIPPPNLPVSMANPLHPNLPATTTMPSSLPLGPGLGSAAAQSPAIVAAVQGNLLPSASPLPDPGTPLPPDPTAPSPGTVTPVPPPQ.

The tract at residues 1-274 is marR-like, BRCT and chromo domains module; sequence MAVRKKDGGP…PVSRRKKISA (274 aa). One can recognise a MarR-like domain in the interval 10 to 136; sequence PNVKYYEAAD…IEKSLVQNNC (127 aa). Residues 140-183 enclose the BRCT; N-terminus domain; that stretch reads PNIFLCPEIEPKLLGKLKDIVKRHQGTISEDKSNASHVVYPVPG. One can recognise a Chromo domain in the interval 189-217; it reads EWVRPVMKRDKQVLLHWGYYPDSYDTWIP. In terms of domain architecture, BRCT; C-terminus spans 233–257; the sequence is KPRKVHAKWILDTDTFNEWMNEEDY. Positions 256–413 are disordered; it reads DYEVSDDKSP…GEQTKNPDLH (158 aa). Residues 275 to 284 show a composition bias toward polar residues; the sequence is KTLTDEVNSP. 5 positions are modified to phosphoserine: S283, S286, S302, S304, and S306. An N6-(ADP-ribosyl)lysine modification is found at K312. Position 326 is an N6-acetyllysine (K326). Over residues 331-344 the composition is skewed to basic and acidic residues; it reads HREEEQEDLTKDMD. Phosphoserine is present on residues S347 and S387. A compositionally biased stretch (acidic residues) spans 379–398; that stretch reads DLDEQDDESMETTGKDEDEN. One can recognise an SWIRM domain in the interval 424–521; that stretch reads IIIPSYAAWF…YQVDAESRPT (98 aa). Glycyl lysine isopeptide (Lys-Gly) (interchain with G-Cter in SUMO2) cross-links involve residues K564, K566, K568, and K592. The SANT domain occupies 596 to 647; it reads SATREWTEQETLLLLEALEMYKDDWNKVSEHVGSRTQDECILHFLRLPIEDP. A Glycyl lysine isopeptide (Lys-Gly) (interchain with G-Cter in SUMO2) cross-link involves residue K704. The interval 724 to 848 is disordered; the sequence is KVTGKADPAF…AEPEGERKTK (125 aa). Basic and acidic residues predominate over residues 747-777; it reads EPERIEESGTEEARPEGQAADEKKEPKEPRE. K787 is covalently cross-linked (Glycyl lysine isopeptide (Lys-Gly) (interchain with G-Cter in SUMO2)). Residues 788–848 are compositionally biased toward basic and acidic residues; it reads EEISEVPKKD…AEPEGERKTK (61 aa). S813 is modified (phosphoserine). K848 participates in a covalent cross-link: Glycyl lysine isopeptide (Lys-Gly) (interchain with G-Cter in SUMO2). Residues 907–934 adopt a coiled-coil conformation; that stretch reads EELETIMDREREALEYQRQQLLADRQAF. 2 disordered regions span residues 947–1073 and 1181–1213; these read RQQH…HPGV and LPSA…PPPQ. The span at 949-962 shows a compositional bias: low complexity; sequence QHFQQMHQQQQQQP. A compositionally biased stretch (pro residues) spans 963–974; it reads PTLPPGSQPIPP. Residues 975–1033 are compositionally biased toward low complexity; sequence TGAAGPPTVHGLAVPPAAVASAPPGSGAPPGSLGPSEQIGQAGTTAGPQQPQQAGAPQP. Composition is skewed to pro residues over residues 1034 to 1060 and 1185 to 1201; these read GAVP…PPSM and SPLP…PTAP.

Belongs to the SMARCC family. In terms of assembly, component of the multiprotein chromatin-remodeling complexes SWI/SNF: SWI/SNF-A (BAF), SWI/SNF-B (PBAF) and related complexes. The canonical complex contains a catalytic subunit (either SMARCA4/BRG1/BAF190A or SMARCA2/BRM/BAF190B) and at least SMARCE1, ACTL6A/BAF53, SMARCC1/BAF155, SMARCC2/BAF170, and SMARCB1/SNF5/BAF47. Other subunits specific to each of the complexes may also be present permitting several possible combinations developmentally and tissue specific. Component of the BAF complex, which includes at least actin (ACTB), ARID1A/BAF250A, ARID1B/BAF250B, SMARCA2/BRM, SMARCA4/BRG1, ACTL6A/BAF53, ACTL6B/BAF53B, SMARCE1/BAF57, SMARCC1/BAF155, SMARCC2/BAF170, SMARCB1/SNF5/INI1, and one or more SMARCD1/BAF60A, SMARCD2/BAF60B, or SMARCD3/BAF60C. In muscle cells, the BAF complex also contains DPF3. Component of neural progenitors-specific chromatin remodeling complex (npBAF complex) composed of at least, ARID1A/BAF250A or ARID1B/BAF250B, SMARCD1/BAF60A, SMARCD3/BAF60C, SMARCA2/BRM/BAF190B, SMARCA4/BRG1/BAF190A, SMARCB1/BAF47, SMARCC1/BAF155, SMARCE1/BAF57, SMARCC2/BAF170, PHF10/BAF45A, ACTL6A/BAF53A and actin. Component of neuron-specific chromatin remodeling complex (nBAF complex) composed of at least, ARID1A/BAF250A or ARID1B/BAF250B, SMARCD1/BAF60A, SMARCD3/BAF60C, SMARCA2/BRM/BAF190B, SMARCA4/BRG1/BAF190A, SMARCB1/BAF47, SMARCC1/BAF155, SMARCE1/BAF57, SMARCC2/BAF170, DPF1/BAF45B, DPF3/BAF45C, ACTL6B/BAF53B and actin. Component of the SWI/SNF-B (PBAF) chromatin remodeling complex, at least composed of SMARCA4/BRG1, SMARCB1/BAF47/SNF5, ACTL6A/BAF53A or ACTL6B/BAF53B, SMARCE1/BAF57, SMARCD1/BAF60A, SMARCD2/BAF60B, perhaps SMARCD3/BAF60C, SMARCC1/BAF155, SMARCC2/BAF170, PBRM1/BAF180, ARID2/BAF200 and actin. May also interact with the SIN3A histone deacetylase transcription repressor complex in conjunction with SMARCA2 and SMARCA4. Interacts with SMARD1. Interacts with KDM6B. Interaction with RCOR1. Interacts with DPF2. Interacts with ERCC6. Interacts with FOS. Mono-ADP-ribosylation at Lys-312 by SIRT6 promotes recruitment to the enhancer region of the Heme oxygenase-1 (HO-1) locus, leading to transcription activation of the locus.

It localises to the nucleus. Involved in transcriptional activation and repression of select genes by chromatin remodeling (alteration of DNA-nucleosome topology). Component of SWI/SNF chromatin remodeling complexes that carry out key enzymatic activities, changing chromatin structure by altering DNA-histone contacts within a nucleosome in an ATP-dependent manner. Can stimulate the ATPase activity of the catalytic subunit of these complexes. May be required for CoREST dependent repression of neuronal specific gene promoters in non-neuronal cells. Belongs to the neural progenitors-specific chromatin remodeling complex (npBAF complex) and the neuron-specific chromatin remodeling complex (nBAF complex). During neural development a switch from a stem/progenitor to a postmitotic chromatin remodeling mechanism occurs as neurons exit the cell cycle and become committed to their adult state. The transition from proliferating neural stem/progenitor cells to postmitotic neurons requires a switch in subunit composition of the npBAF and nBAF complexes. As neural progenitors exit mitosis and differentiate into neurons, npBAF complexes which contain ACTL6A/BAF53A and PHF10/BAF45A, are exchanged for homologous alternative ACTL6B/BAF53B and DPF1/BAF45B or DPF3/BAF45C subunits in neuron-specific complexes (nBAF). The npBAF complex is essential for the self-renewal/proliferative capacity of the multipotent neural stem cells. The nBAF complex along with CREST plays a role regulating the activity of genes essential for dendrite growth. Critical regulator of myeloid differentiation, controlling granulocytopoiesis and the expression of genes involved in neutrophil granule formation. The sequence is that of SWI/SNF complex subunit SMARCC2 (Smarcc2) from Mus musculus (Mouse).